A 206-amino-acid chain; its full sequence is Ras-related protein Ral-B (206 aa).

GTP is bound at residue 21–29; it reads GSGGVGKSA. The short motif at 43–51 is the Effector region element; the sequence is YEPTKADSY. GTP contacts are provided by residues 68–72, 128–131, and 158–160; these read DTAGQ, NKSD, and SAK. The span at 180 to 189 shows a compositional bias: basic and acidic residues; the sequence is KMSENKDKNG. A disordered region spans residues 180 to 206; it reads KMSENKDKNGKKSGKNKKSFKERCCLL. C203 carries the post-translational modification Cysteine methyl ester. C203 carries S-geranylgeranyl cysteine lipidation. The propeptide at 204-206 is removed in mature form; sequence CLL.

This sequence belongs to the small GTPase superfamily. Ras family. In terms of assembly, interacts with EXOC2/Sec5 and EXOC8/Exo84. Interacts (via effector domain) with RALBP1. In terms of processing, prenylation is essential for membrane localization. The farnesylated form confers resistance to the proapoptotic and anti-anchorage-dependent growth effects of some geranylgeranyltransferase I inhibitors.

The protein localises to the cell membrane. The protein resides in the midbody. It carries out the reaction GTP + H2O = GDP + phosphate + H(+). With respect to regulation, alternates between an inactive form bound to GDP and an active form bound to GTP. Activated by a guanine nucleotide-exchange factor (GEF) and inactivated by a GTPase-activating protein (GAP). Its function is as follows. Multifunctional GTPase involved in a variety of cellular processes including gene expression, cell migration, cell proliferation, oncogenic transformation and membrane trafficking. Accomplishes its multiple functions by interacting with distinct downstream effectors. Acts as a GTP sensor for GTP-dependent exocytosis of dense core vesicles. Required both to stabilize the assembly of the exocyst complex and to localize functional exocyst complexes to the leading edge of migrating cells. Required for suppression of apoptosis. In late stages of cytokinesis, upon completion of the bridge formation between dividing cells, mediates exocyst recruitment to the midbody to drive abscission. Involved in ligand-dependent receptor mediated endocytosis of the EGF and insulin receptors. The protein is Ras-related protein Ral-B (RALB) of Macaca fascicularis (Crab-eating macaque).